The chain runs to 310 residues: ADP-L-glycero-D-manno-heptose-6-epimerase (310 aa).

NADP(+) is bound by residues 10-11, 31-32, Lys-38, Lys-53, 75-79, and Asn-92; these read FI, DN, and EGACS. Residue Tyr-140 is the Proton acceptor of the active site. Lys-144 serves as a coordination point for NADP(+). Substrate is bound at residue Asn-169. Residues Val-170 and Lys-178 each contribute to the NADP(+) site. The active-site Proton acceptor is the Lys-178. Residues Ser-180, His-187, 201–204, Arg-209, and Tyr-272 each bind substrate; that span reads FEGS.

It belongs to the NAD(P)-dependent epimerase/dehydratase family. HldD subfamily. As to quaternary structure, homopentamer. NADP(+) serves as cofactor.

The enzyme catalyses ADP-D-glycero-beta-D-manno-heptose = ADP-L-glycero-beta-D-manno-heptose. The protein operates within nucleotide-sugar biosynthesis; ADP-L-glycero-beta-D-manno-heptose biosynthesis; ADP-L-glycero-beta-D-manno-heptose from D-glycero-beta-D-manno-heptose 7-phosphate: step 4/4. Functionally, catalyzes the interconversion between ADP-D-glycero-beta-D-manno-heptose and ADP-L-glycero-beta-D-manno-heptose via an epimerization at carbon 6 of the heptose. The sequence is that of ADP-L-glycero-D-manno-heptose-6-epimerase from Salmonella heidelberg (strain SL476).